A 256-amino-acid polypeptide reads, in one-letter code: Tryptophan synthase alpha chain (256 aa).

Active-site proton acceptor residues include Glu-46 and Asp-57.

The protein belongs to the TrpA family. Tetramer of two alpha and two beta chains.

The catalysed reaction is (1S,2R)-1-C-(indol-3-yl)glycerol 3-phosphate + L-serine = D-glyceraldehyde 3-phosphate + L-tryptophan + H2O. The protein operates within amino-acid biosynthesis; L-tryptophan biosynthesis; L-tryptophan from chorismate: step 5/5. Functionally, the alpha subunit is responsible for the aldol cleavage of indoleglycerol phosphate to indole and glyceraldehyde 3-phosphate. The protein is Tryptophan synthase alpha chain of Bacteroides thetaiotaomicron (strain ATCC 29148 / DSM 2079 / JCM 5827 / CCUG 10774 / NCTC 10582 / VPI-5482 / E50).